The primary structure comprises 487 residues: Iron-sulfur cluster assembly SufBD family protein ycf24 (487 aa).

It belongs to the iron-sulfur cluster assembly SufBD family.

Its subcellular location is the plastid. The protein resides in the chloroplast. The protein is Iron-sulfur cluster assembly SufBD family protein ycf24 (ycf24) of Pyropia yezoensis (Susabi-nori).